The chain runs to 418 residues: Serine hydroxymethyltransferase (418 aa).

(6S)-5,6,7,8-tetrahydrofolate contacts are provided by residues L121 and 125 to 127 (GHL). K230 is subject to N6-(pyridoxal phosphate)lysine. (6S)-5,6,7,8-tetrahydrofolate-binding positions include E246 and 355-357 (SPF).

Belongs to the SHMT family. As to quaternary structure, homodimer. Requires pyridoxal 5'-phosphate as cofactor.

It is found in the cytoplasm. It catalyses the reaction (6R)-5,10-methylene-5,6,7,8-tetrahydrofolate + glycine + H2O = (6S)-5,6,7,8-tetrahydrofolate + L-serine. The protein operates within one-carbon metabolism; tetrahydrofolate interconversion. It participates in amino-acid biosynthesis; glycine biosynthesis; glycine from L-serine: step 1/1. Catalyzes the reversible interconversion of serine and glycine with tetrahydrofolate (THF) serving as the one-carbon carrier. This reaction serves as the major source of one-carbon groups required for the biosynthesis of purines, thymidylate, methionine, and other important biomolecules. Also exhibits THF-independent aldolase activity toward beta-hydroxyamino acids, producing glycine and aldehydes, via a retro-aldol mechanism. This chain is Serine hydroxymethyltransferase, found in Streptococcus pneumoniae serotype 19F (strain G54).